Consider the following 459-residue polypeptide: Putrescine aminotransferase (459 aa).

Pyridoxal 5'-phosphate contacts are provided by residues 150–151 (GT) and Gln274. N6-(pyridoxal phosphate)lysine is present on Lys300. Thr332 provides a ligand contact to pyridoxal 5'-phosphate.

Belongs to the class-III pyridoxal-phosphate-dependent aminotransferase family. Putrescine aminotransferase subfamily. Pyridoxal 5'-phosphate serves as cofactor.

It carries out the reaction an alkane-alpha,omega-diamine + 2-oxoglutarate = an omega-aminoaldehyde + L-glutamate. The enzyme catalyses putrescine + 2-oxoglutarate = 1-pyrroline + L-glutamate + H2O. The catalysed reaction is cadaverine + 2-oxoglutarate = 5-aminopentanal + L-glutamate. It functions in the pathway amine and polyamine degradation; putrescine degradation; 4-aminobutanal from putrescine (transaminase route): step 1/1. Its function is as follows. Catalyzes the aminotransferase reaction from putrescine to 2-oxoglutarate, leading to glutamate and 4-aminobutanal, which spontaneously cyclizes to form 1-pyrroline. This is the first step in one of two pathways for putrescine degradation, where putrescine is converted into 4-aminobutanoate (gamma-aminobutyrate or GABA) via 4-aminobutanal. Also functions as a cadaverine transaminase in a a L-lysine degradation pathway to succinate that proceeds via cadaverine, glutarate and L-2-hydroxyglutarate. This chain is Putrescine aminotransferase, found in Escherichia coli O9:H4 (strain HS).